The chain runs to 560 residues: Membrane protein insertase YidC (560 aa).

The helical transmembrane segment at 7–27 threads the bilayer; the sequence is ILIVALAIVSYVMVLKWNQDY. A disordered region spans residues 43–72; sequence APAIPDTPLGNNASASADVPSANGETSAPL. 4 helical membrane passes run 367-387, 437-457, 468-488, and 515-535; these read IVGN…GIFF, LGGC…YWVL, FMLW…PIIM, and PIIF…YWVV.

It belongs to the OXA1/ALB3/YidC family. Type 1 subfamily. Interacts with the Sec translocase complex via SecD. Specifically interacts with transmembrane segments of nascent integral membrane proteins during membrane integration.

The protein resides in the cell inner membrane. Its function is as follows. Required for the insertion and/or proper folding and/or complex formation of integral membrane proteins into the membrane. Involved in integration of membrane proteins that insert both dependently and independently of the Sec translocase complex, as well as at least some lipoproteins. Aids folding of multispanning membrane proteins. In Pseudomonas fluorescens (strain SBW25), this protein is Membrane protein insertase YidC.